Reading from the N-terminus, the 263-residue chain is MRILITNDDGINAPGLDVLHTIATDIAGPGGEVWTVAPAFEQSGVGHCISYTHPTMISEFGPRRFAAEGSPADCVLAGLHDVLKDTPPDLILSGVNKGNNSAENTLYSGTIGAAIEAAIQGLPSIALSQYYGPGNISLDNPFEAASAHGADVIRKILAAPGAFESHPYKLFYNVNFPPVAAADVKGIRAVGQGFREGGTGMGMRADMAPNGRKFLWITGSPQNVPSGADTDATVNIDGYISVTPMRADLTAYDQLQSLKDAIE.

A divalent metal cation contacts are provided by aspartate 8, aspartate 9, serine 43, and asparagine 96.

Belongs to the SurE nucleotidase family. A divalent metal cation serves as cofactor.

It localises to the cytoplasm. The enzyme catalyses a ribonucleoside 5'-phosphate + H2O = a ribonucleoside + phosphate. Functionally, nucleotidase that shows phosphatase activity on nucleoside 5'-monophosphates. The chain is 5'-nucleotidase SurE from Jannaschia sp. (strain CCS1).